We begin with the raw amino-acid sequence, 211 residues long: Probable GTP-binding protein EngB (211 aa).

One can recognise an EngB-type G domain in the interval 21–197; that stretch reads TAPEFAFLGR…WGEIHRVAAE (177 aa). GTP is bound by residues 29–36, 55–59, 80–83, 147–150, and 176–178; these read GRSNVGKS, GRTRA, DLPG, TKAD, and CSA. Ser-36 and Thr-57 together coordinate Mg(2+).

It belongs to the TRAFAC class TrmE-Era-EngA-EngB-Septin-like GTPase superfamily. EngB GTPase family. Requires Mg(2+) as cofactor.

Its function is as follows. Necessary for normal cell division and for the maintenance of normal septation. This is Probable GTP-binding protein EngB from Acidobacterium capsulatum (strain ATCC 51196 / DSM 11244 / BCRC 80197 / JCM 7670 / NBRC 15755 / NCIMB 13165 / 161).